A 141-amino-acid chain; its full sequence is Hemoglobin subunit alpha (141 aa).

A Globin domain is found at 1 to 141; that stretch reads VLSANDKANV…VSTVLTSKYR (141 aa). Serine 3 bears the Phosphoserine mark. 2 positions are modified to N6-succinyllysine: lysine 7 and lysine 11. Lysine 16 carries the N6-acetyllysine; alternate modification. An N6-succinyllysine; alternate modification is found at lysine 16. Tyrosine 24 bears the Phosphotyrosine mark. Serine 35 is subject to Phosphoserine. Lysine 40 is modified (N6-succinyllysine). Serine 49 is modified (phosphoserine). Histidine 58 is an O2 binding site. Histidine 87 serves as a coordination point for heme b. Position 102 is a phosphoserine (serine 102). Residue threonine 108 is modified to Phosphothreonine. Residues serine 124 and serine 131 each carry the phosphoserine modification. Threonine 134 and threonine 137 each carry phosphothreonine. A Phosphoserine modification is found at serine 138.

Belongs to the globin family. Heterotetramer of two alpha chains and two beta chains. As to expression, red blood cells.

Its function is as follows. Involved in oxygen transport from the lung to the various peripheral tissues. Hemopressin acts as an antagonist peptide of the cannabinoid receptor CNR1. Hemopressin-binding efficiently blocks cannabinoid receptor CNR1 and subsequent signaling. In Suncus murinus (Asian house shrew), this protein is Hemoglobin subunit alpha (HBA).